Here is a 693-residue protein sequence, read N- to C-terminus: Elongation factor G (693 aa).

The tr-type G domain occupies 8 to 282; the sequence is KNTRNIGIMA…AVIDYLPSPL (275 aa). GTP contacts are provided by residues 17–24, 81–85, and 135–138; these read AHIDAGKT, DTPGH, and NKMD.

Belongs to the TRAFAC class translation factor GTPase superfamily. Classic translation factor GTPase family. EF-G/EF-2 subfamily.

The protein resides in the cytoplasm. Its function is as follows. Catalyzes the GTP-dependent ribosomal translocation step during translation elongation. During this step, the ribosome changes from the pre-translocational (PRE) to the post-translocational (POST) state as the newly formed A-site-bound peptidyl-tRNA and P-site-bound deacylated tRNA move to the P and E sites, respectively. Catalyzes the coordinated movement of the two tRNA molecules, the mRNA and conformational changes in the ribosome. This is Elongation factor G from Staphylococcus intermedius.